Reading from the N-terminus, the 123-residue chain is Small ribosomal subunit protein uS12 (123 aa).

A disordered region spans residues 1 to 23; the sequence is MPTISQLVKKGREKVEKKTKSPA. At Asp-89 the chain carries 3-methylthioaspartic acid.

It belongs to the universal ribosomal protein uS12 family. As to quaternary structure, part of the 30S ribosomal subunit. Contacts proteins S8 and S17. May interact with IF1 in the 30S initiation complex.

Its function is as follows. With S4 and S5 plays an important role in translational accuracy. In terms of biological role, interacts with and stabilizes bases of the 16S rRNA that are involved in tRNA selection in the A site and with the mRNA backbone. Located at the interface of the 30S and 50S subunits, it traverses the body of the 30S subunit contacting proteins on the other side and probably holding the rRNA structure together. The combined cluster of proteins S8, S12 and S17 appears to hold together the shoulder and platform of the 30S subunit. This is Small ribosomal subunit protein uS12 from Thermodesulfovibrio yellowstonii (strain ATCC 51303 / DSM 11347 / YP87).